The following is an 80-amino-acid chain: uncharacterized protein (80 aa).

Its function is as follows. Essential for virus function. This is an uncharacterized protein from Sulfolobus spindle-shape virus 1 (SSV1).